A 1155-amino-acid polypeptide reads, in one-letter code: DNA-directed RNA polymerase subunit beta (1155 aa).

Belongs to the RNA polymerase beta chain family. As to quaternary structure, the RNAP catalytic core consists of 2 alpha, 1 beta, 1 beta' and 1 omega subunit. When a sigma factor is associated with the core the holoenzyme is formed, which can initiate transcription.

It catalyses the reaction RNA(n) + a ribonucleoside 5'-triphosphate = RNA(n+1) + diphosphate. DNA-dependent RNA polymerase catalyzes the transcription of DNA into RNA using the four ribonucleoside triphosphates as substrates. This Thermobifida fusca (strain YX) protein is DNA-directed RNA polymerase subunit beta.